The following is a 292-amino-acid chain: 4-hydroxy-tetrahydrodipicolinate synthase (292 aa).

A pyruvate-binding site is contributed by threonine 45. Tyrosine 133 functions as the Proton donor/acceptor in the catalytic mechanism. Lysine 161 functions as the Schiff-base intermediate with substrate in the catalytic mechanism. Residue isoleucine 203 coordinates pyruvate.

The protein belongs to the DapA family. In terms of assembly, homodimer.

It is found in the cytoplasm. It carries out the reaction L-aspartate 4-semialdehyde + pyruvate = (2S,4S)-4-hydroxy-2,3,4,5-tetrahydrodipicolinate + H2O + H(+). The protein operates within amino-acid biosynthesis; L-lysine biosynthesis via DAP pathway; (S)-tetrahydrodipicolinate from L-aspartate: step 3/4. Functionally, catalyzes the condensation of (S)-aspartate-beta-semialdehyde [(S)-ASA] and pyruvate to 4-hydroxy-tetrahydrodipicolinate (HTPA). The polypeptide is 4-hydroxy-tetrahydrodipicolinate synthase (Ectopseudomonas mendocina (strain ymp) (Pseudomonas mendocina)).